Here is a 362-residue protein sequence, read N- to C-terminus: Phosphoserine aminotransferase (362 aa).

Arginine 42 contributes to the L-glutamate binding site. Residues 76–77 (AS), tryptophan 102, threonine 152, aspartate 173, and glutamine 196 contribute to the pyridoxal 5'-phosphate site. Residue lysine 197 is modified to N6-(pyridoxal phosphate)lysine. Pyridoxal 5'-phosphate is bound at residue 238–239 (NT).

This sequence belongs to the class-V pyridoxal-phosphate-dependent aminotransferase family. SerC subfamily. Homodimer. It depends on pyridoxal 5'-phosphate as a cofactor.

The protein resides in the cytoplasm. It carries out the reaction O-phospho-L-serine + 2-oxoglutarate = 3-phosphooxypyruvate + L-glutamate. It catalyses the reaction 4-(phosphooxy)-L-threonine + 2-oxoglutarate = (R)-3-hydroxy-2-oxo-4-phosphooxybutanoate + L-glutamate. The protein operates within amino-acid biosynthesis; L-serine biosynthesis; L-serine from 3-phospho-D-glycerate: step 2/3. It participates in cofactor biosynthesis; pyridoxine 5'-phosphate biosynthesis; pyridoxine 5'-phosphate from D-erythrose 4-phosphate: step 3/5. Catalyzes the reversible conversion of 3-phosphohydroxypyruvate to phosphoserine and of 3-hydroxy-2-oxo-4-phosphonooxybutanoate to phosphohydroxythreonine. This chain is Phosphoserine aminotransferase, found in Chromobacterium violaceum (strain ATCC 12472 / DSM 30191 / JCM 1249 / CCUG 213 / NBRC 12614 / NCIMB 9131 / NCTC 9757 / MK).